A 290-amino-acid polypeptide reads, in one-letter code: Probable protein phosphatase 2C 62 (290 aa).

A PPM-type phosphatase domain is found at 38-288; sequence KHGYHLVKGK…DDISCIVVKF (251 aa). Mn(2+) is bound by residues Asp-75, Gly-76, Asp-240, and Asp-279.

It belongs to the PP2C family. It depends on Mg(2+) as a cofactor. Mn(2+) is required as a cofactor.

It catalyses the reaction O-phospho-L-seryl-[protein] + H2O = L-seryl-[protein] + phosphate. It carries out the reaction O-phospho-L-threonyl-[protein] + H2O = L-threonyl-[protein] + phosphate. The sequence is that of Probable protein phosphatase 2C 62 from Oryza sativa subsp. japonica (Rice).